We begin with the raw amino-acid sequence, 208 residues long: RNA chaperone ProQ (208 aa).

The segment covering 106–127 has biased composition (basic and acidic residues); that stretch reads SKAKVATRRKEQAKKAREEAKA. Positions 106-154 are disordered; sequence SKAKVATRRKEQAKKAREEAKAKKTARAATPPKRRPQPAAKKVEQPVET.

This sequence belongs to the ProQ family.

It is found in the cytoplasm. Functionally, RNA chaperone with significant RNA binding, RNA strand exchange and RNA duplexing activities. The polypeptide is RNA chaperone ProQ (Aliivibrio fischeri (strain ATCC 700601 / ES114) (Vibrio fischeri)).